The primary structure comprises 142 residues: Salivary protein 15b (142 aa).

Residues 1-20 form the signal peptide; sequence MKYLGLALISAVFLIGTCQA. 3 disulfide bridges follow: cysteine 27/cysteine 44, cysteine 40/cysteine 108, and cysteine 91/cysteine 117.

This sequence belongs to the PBP/GOBP family. As to expression, female salivary gland.

Its subcellular location is the secreted. In terms of biological role, inhibits contact coagulation pathway activation in the host by sequestering anionic polymers, such as dextran sulfate and heparin, and thus blocking interaction of protein components of the pathway with negatively charged surfaces. Inhibits dextran sulfate-mediated autoactivation of host coagulation factor XII (F12). Inhibits dextran sulfate-mediated activation of host factor XI (F11) by activated F12. Inhibits polyphosphate-induced plasma extravasation at the injection site in mouse model, probably via inhibition of bradykinin generation in host skin. This is Salivary protein 15b from Phlebotomus duboscqi (Sandfly).